The primary structure comprises 148 residues: SPbeta prophage-derived disulfide bond formation protein B (148 aa).

Residues 7-26 (KSFFLLLFFLSFFGTMASLF) form a helical membrane-spanning segment. A disulfide bond links C36 and C39. The next 2 helical transmembrane spans lie at 41-60 (YQRI…LLKK) and 67-84 (YVVF…YHYI). An intrachain disulfide couples C95 to C102. A helical transmembrane segment spans residues 111-135 (GFITLPLMSSVCFALIFGIGLKLII).

Belongs to the DsbB family. BdbC subfamily.

The protein resides in the cell membrane. In terms of biological role, important but not absolutely essential for the production of the lantibiotic sublancin 168, it may also be required for the stability of other secreted proteins. Not required for competence for DNA uptake. In Bacillus subtilis (strain 168), this protein is SPbeta prophage-derived disulfide bond formation protein B (bdbB).